The primary structure comprises 187 residues: NAC domain-containing protein 104 (187 aa).

The NAC domain maps to 3-155; it reads LPPGFRFFPT…KWVICRVYEQ (153 aa). A DNA-binding region spans residues 94–161; sequence VGIKKYLTFY…VYEQNCSEEE (68 aa). Residues 118–142 are disordered; sequence LPDSSSSSSRSSKRSSRASSSSHKP.

Expressed in root xylem vessels. Expressed in stems, vascular tissue of cauline leaves and tracheary elements of sepals.

The protein resides in the nucleus. Its function is as follows. Probable transcription factor that influences tracheary elements and xylem development by negatively regulating secondary cell wall fiber synthesis and programmed cell death. The polypeptide is NAC domain-containing protein 104 (Arabidopsis thaliana (Mouse-ear cress)).